We begin with the raw amino-acid sequence, 364 residues long: Chorismate synthase (364 aa).

Position 48 (Arg-48) interacts with NADP(+). Residues 131 to 133, 243 to 244, Gly-288, 303 to 307, and Arg-329 each bind FMN; these read RSS, NA, and KPTSS.

The protein belongs to the chorismate synthase family. As to quaternary structure, homotetramer. FMNH2 serves as cofactor.

It carries out the reaction 5-O-(1-carboxyvinyl)-3-phosphoshikimate = chorismate + phosphate. The protein operates within metabolic intermediate biosynthesis; chorismate biosynthesis; chorismate from D-erythrose 4-phosphate and phosphoenolpyruvate: step 7/7. Catalyzes the anti-1,4-elimination of the C-3 phosphate and the C-6 proR hydrogen from 5-enolpyruvylshikimate-3-phosphate (EPSP) to yield chorismate, which is the branch point compound that serves as the starting substrate for the three terminal pathways of aromatic amino acid biosynthesis. This reaction introduces a second double bond into the aromatic ring system. The sequence is that of Chorismate synthase from Brucella abortus (strain S19).